Here is a 555-residue protein sequence, read N- to C-terminus: E3 ubiquitin-protein ligase NEURL1B (555 aa).

In terms of domain architecture, NHR 1 spans 38 to 194; that stretch reads APRFHAQAKG…ITDEVQLLES (157 aa). At threonine 199 the chain carries Phosphothreonine. The 155-residue stretch at 279 to 433 folds into the NHR 2 domain; it reads DLRFHATRGP…GVAGQLRLLG (155 aa). The tract at residues 436 to 493 is disordered; sequence QSSPATTTPSGSLSGSQDDSDSDMTFSVNQSSSASESSLVTAPSSPLSPPVSPVFSPP. Residues 462-480 are compositionally biased toward low complexity; it reads SVNQSSSASESSLVTAPSS. Positions 481 to 493 are enriched in pro residues; it reads PLSPPVSPVFSPP. The segment at 503–543 adopts an RING-type zinc-finger fold; it reads CTVCFDGEVDTVIYTCGHMCLCHSCGLRLKRQARACCPICR.

Interacts with JAG1, DLL1 and DLL4. As to expression, highest expression in brain, prostate and small intestine. In the brain the levels are higher in fetal than in adult stage. In the adult brain the highest levels are detected in the olfactory system, cerebellar cortex, optic nerve and the frontal lobe.

The protein resides in the cytoplasm. The enzyme catalyses S-ubiquitinyl-[E2 ubiquitin-conjugating enzyme]-L-cysteine + [acceptor protein]-L-lysine = [E2 ubiquitin-conjugating enzyme]-L-cysteine + N(6)-ubiquitinyl-[acceptor protein]-L-lysine.. The protein operates within protein modification; protein ubiquitination. Functionally, E3 ubiquitin-protein ligase involved in regulation of the Notch pathway through influencing the stability and activity of several Notch ligands. The polypeptide is E3 ubiquitin-protein ligase NEURL1B (NEURL1B) (Homo sapiens (Human)).